The sequence spans 314 residues: tRNA dimethylallyltransferase (314 aa).

9-16 (GPTAVGKT) provides a ligand contact to ATP. 11-16 (TAVGKT) is a binding site for substrate. The interval 34–37 (DSVQ) is interaction with substrate tRNA.

This sequence belongs to the IPP transferase family. Monomer. Requires Mg(2+) as cofactor.

The enzyme catalyses adenosine(37) in tRNA + dimethylallyl diphosphate = N(6)-dimethylallyladenosine(37) in tRNA + diphosphate. Catalyzes the transfer of a dimethylallyl group onto the adenine at position 37 in tRNAs that read codons beginning with uridine, leading to the formation of N6-(dimethylallyl)adenosine (i(6)A). This chain is tRNA dimethylallyltransferase, found in Desulfitobacterium hafniense (strain Y51).